The sequence spans 149 residues: Protein FAM72A (149 aa).

The protein belongs to the FAM72 family. In terms of assembly, interacts with UNG. Expressed at high levels in stomach and also in kidney and, at low levels, in heart (at protein level). In the stomach, highly expressed in foveolar cells, parietal cells and chief cells (at protein level). In kidney, expressed in endothelial cells, mesangial and epithelial cells (parietal and visceral epithelium) around glomerulus (at protein level).

Its subcellular location is the cytoplasm. The protein resides in the mitochondrion. May play a role in the regulation of cellular reactive oxygen species metabolism. May participate in cell growth regulation. This chain is Protein FAM72A (FAM72A), found in Bos taurus (Bovine).